Here is a 29-residue protein sequence, read N- to C-terminus: NAD(P)H-quinone oxidoreductase subunit 5, chloroplastic (29 aa).

The chain crosses the membrane as a helical span at residues 1-15 (SGSIIHSMEANVGYS).

It belongs to the complex I subunit 5 family. As to quaternary structure, NDH is composed of at least 16 different subunits, 5 of which are encoded in the nucleus.

The protein resides in the plastid. It is found in the chloroplast thylakoid membrane. It carries out the reaction a plastoquinone + NADH + (n+1) H(+)(in) = a plastoquinol + NAD(+) + n H(+)(out). It catalyses the reaction a plastoquinone + NADPH + (n+1) H(+)(in) = a plastoquinol + NADP(+) + n H(+)(out). In terms of biological role, NDH shuttles electrons from NAD(P)H:plastoquinone, via FMN and iron-sulfur (Fe-S) centers, to quinones in the photosynthetic chain and possibly in a chloroplast respiratory chain. The immediate electron acceptor for the enzyme in this species is believed to be plastoquinone. Couples the redox reaction to proton translocation, and thus conserves the redox energy in a proton gradient. In Pseudotsuga menziesii (Douglas-fir), this protein is NAD(P)H-quinone oxidoreductase subunit 5, chloroplastic.